The following is a 195-amino-acid chain: Probable GTP-binding protein EngB (195 aa).

Residues 22–194 (LKGEVAFVGR…LDLISTLLKE (173 aa)) enclose the EngB-type G domain. Residues 30–37 (GRSNVGKS), 56–60 (GKTRS), 74–77 (DLPG), 141–144 (TKMD), and 173–175 (TSS) each bind GTP. Mg(2+) contacts are provided by S37 and T58.

This sequence belongs to the TRAFAC class TrmE-Era-EngA-EngB-Septin-like GTPase superfamily. EngB GTPase family. It depends on Mg(2+) as a cofactor.

Its function is as follows. Necessary for normal cell division and for the maintenance of normal septation. This Thermotoga petrophila (strain ATCC BAA-488 / DSM 13995 / JCM 10881 / RKU-1) protein is Probable GTP-binding protein EngB.